A 241-amino-acid polypeptide reads, in one-letter code: Biosynthetic peptidoglycan transglycosylase (241 aa).

A helical transmembrane segment spans residues 18 to 38 (GVIGIIALWMAGILIFAFLPV).

It belongs to the glycosyltransferase 51 family.

The protein localises to the cell inner membrane. It catalyses the reaction [GlcNAc-(1-&gt;4)-Mur2Ac(oyl-L-Ala-gamma-D-Glu-L-Lys-D-Ala-D-Ala)](n)-di-trans,octa-cis-undecaprenyl diphosphate + beta-D-GlcNAc-(1-&gt;4)-Mur2Ac(oyl-L-Ala-gamma-D-Glu-L-Lys-D-Ala-D-Ala)-di-trans,octa-cis-undecaprenyl diphosphate = [GlcNAc-(1-&gt;4)-Mur2Ac(oyl-L-Ala-gamma-D-Glu-L-Lys-D-Ala-D-Ala)](n+1)-di-trans,octa-cis-undecaprenyl diphosphate + di-trans,octa-cis-undecaprenyl diphosphate + H(+). It functions in the pathway cell wall biogenesis; peptidoglycan biosynthesis. In terms of biological role, peptidoglycan polymerase that catalyzes glycan chain elongation from lipid-linked precursors. The chain is Biosynthetic peptidoglycan transglycosylase from Yersinia pseudotuberculosis serotype O:3 (strain YPIII).